The following is a 357-amino-acid chain: 3-dehydroquinate synthase (357 aa).

NAD(+)-binding positions include 69–74 (DGEQFK), 103–107 (GVVGD), 127–128 (TT), K140, K149, and 167–170 (CLQT). Zn(2+) contacts are provided by E182, H245, and H262.

This sequence belongs to the sugar phosphate cyclases superfamily. Dehydroquinate synthase family. Requires Co(2+) as cofactor. Zn(2+) is required as a cofactor. NAD(+) serves as cofactor.

The protein resides in the cytoplasm. The enzyme catalyses 7-phospho-2-dehydro-3-deoxy-D-arabino-heptonate = 3-dehydroquinate + phosphate. The protein operates within metabolic intermediate biosynthesis; chorismate biosynthesis; chorismate from D-erythrose 4-phosphate and phosphoenolpyruvate: step 2/7. Catalyzes the conversion of 3-deoxy-D-arabino-heptulosonate 7-phosphate (DAHP) to dehydroquinate (DHQ). This is 3-dehydroquinate synthase from Idiomarina loihiensis (strain ATCC BAA-735 / DSM 15497 / L2-TR).